Reading from the N-terminus, the 499-residue chain is Bifunctional purine biosynthesis protein PurH (499 aa).

The 144-residue stretch at 1 to 144 (MIKRALISVF…KNFKDVVVLT (144 aa)) folds into the MGS-like domain.

This sequence belongs to the PurH family.

The enzyme catalyses (6R)-10-formyltetrahydrofolate + 5-amino-1-(5-phospho-beta-D-ribosyl)imidazole-4-carboxamide = 5-formamido-1-(5-phospho-D-ribosyl)imidazole-4-carboxamide + (6S)-5,6,7,8-tetrahydrofolate. It carries out the reaction IMP + H2O = 5-formamido-1-(5-phospho-D-ribosyl)imidazole-4-carboxamide. Its pathway is purine metabolism; IMP biosynthesis via de novo pathway; 5-formamido-1-(5-phospho-D-ribosyl)imidazole-4-carboxamide from 5-amino-1-(5-phospho-D-ribosyl)imidazole-4-carboxamide (10-formyl THF route): step 1/1. It participates in purine metabolism; IMP biosynthesis via de novo pathway; IMP from 5-formamido-1-(5-phospho-D-ribosyl)imidazole-4-carboxamide: step 1/1. This chain is Bifunctional purine biosynthesis protein PurH, found in Clostridium botulinum (strain Hall / ATCC 3502 / NCTC 13319 / Type A).